We begin with the raw amino-acid sequence, 258 residues long: Tryptophan synthase alpha chain (258 aa).

Residues E47 and D58 each act as proton acceptor in the active site.

It belongs to the TrpA family. In terms of assembly, tetramer of two alpha and two beta chains.

It catalyses the reaction (1S,2R)-1-C-(indol-3-yl)glycerol 3-phosphate + L-serine = D-glyceraldehyde 3-phosphate + L-tryptophan + H2O. Its pathway is amino-acid biosynthesis; L-tryptophan biosynthesis; L-tryptophan from chorismate: step 5/5. Functionally, the alpha subunit is responsible for the aldol cleavage of indoleglycerol phosphate to indole and glyceraldehyde 3-phosphate. The sequence is that of Tryptophan synthase alpha chain from Bacillus mycoides (strain KBAB4) (Bacillus weihenstephanensis).